Here is an 844-residue protein sequence, read N- to C-terminus: Aminopeptidase N (844 aa).

Substrate is bound by residues E120 and 253–257; that span reads GAMEN. H289 contacts Zn(2+). E290 acts as the Proton acceptor in catalysis. Zn(2+) is bound by residues H293 and E312.

Belongs to the peptidase M1 family. Monomer. Zn(2+) is required as a cofactor.

The protein resides in the cytoplasm. The catalysed reaction is Release of an N-terminal amino acid, Xaa-|-Yaa- from a peptide, amide or arylamide. Xaa is preferably Ala, but may be most amino acids including Pro (slow action). When a terminal hydrophobic residue is followed by a prolyl residue, the two may be released as an intact Xaa-Pro dipeptide.. Its function is as follows. Aminopeptidase N is involved in the degradation of intracellular peptides generated by protein breakdown during normal growth as well as in response to nutrient starvation. This is Aminopeptidase N (pepN) from Lactobacillus helveticus (Lactobacillus suntoryeus).